A 101-amino-acid polypeptide reads, in one-letter code: Small ribosomal subunit protein uS14 (101 aa).

Belongs to the universal ribosomal protein uS14 family. As to quaternary structure, part of the 30S ribosomal subunit. Contacts proteins S3 and S10.

In terms of biological role, binds 16S rRNA, required for the assembly of 30S particles and may also be responsible for determining the conformation of the 16S rRNA at the A site. This chain is Small ribosomal subunit protein uS14, found in Polynucleobacter necessarius subsp. necessarius (strain STIR1).